The following is a 291-amino-acid chain: Ribosomal large subunit pseudouridine synthase B (291 aa).

In terms of domain architecture, S4 RNA-binding spans 3–63; it reads EKLQKVLARA…GHLISVKESA (61 aa). Catalysis depends on aspartate 110, which acts as the Nucleophile. A disordered region spans residues 272-291; that stretch reads VKRHSQIAGGRRSGGRNNNG.

The protein belongs to the pseudouridine synthase RsuA family.

It catalyses the reaction uridine(2605) in 23S rRNA = pseudouridine(2605) in 23S rRNA. Functionally, responsible for synthesis of pseudouridine from uracil-2605 in 23S ribosomal RNA. This is Ribosomal large subunit pseudouridine synthase B (rluB) from Salmonella typhi.